We begin with the raw amino-acid sequence, 153 residues long: MSEENPCPRNIFLLCREYGLELEDLRILCVYCKRPLSDADVLAFAVKELFVVWRKGFPYGACEKCLIAAAKLRQYRHWHYSCYGDTVETETGIPIPQLFMRCYICHKPLCWEEKEALLVGNKRFHKISGQWTGHCMNCAPRCMENAPALRTSH.

Zinc fingers lie at residues 29-65 (CVYC…CEKC) and 102-138 (CYIC…CMNC).

Belongs to the papillomaviridae E6 protein family. In terms of assembly, forms homodimers. Interacts with ubiquitin-protein ligase UBE3A/E6-AP; this interaction stimulates UBE3A ubiquitin activity. Interacts with host TP53 and EP300; this interaction inhibits TP53 activity.

It localises to the host cytoplasm. Its subcellular location is the host nucleus. Its function is as follows. Plays a major role in the induction and maintenance of cellular transformation. E6 associates with host UBE3A/E6-AP ubiquitin-protein ligase and modulates its activity. Sequesters tumor suppressor TP53 in the host cytoplasm and modulates its activity by interacting with host EP300 that results in the reduction of TP53 acetylation and activation. In turn, apoptosis induced by DNA damage is inhibited. E6 also protects host keratinocytes from apoptosis by mediating the degradation of host BAK1. May also inhibit host immune response. This Homo sapiens (Human) protein is Protein E6.